The primary structure comprises 66 residues: Large ribosomal subunit protein bL33 (66 aa).

The protein belongs to the bacterial ribosomal protein bL33 family.

This is Large ribosomal subunit protein bL33 from Synechococcus sp. (strain CC9311).